Reading from the N-terminus, the 230-residue chain is ATP synthase subunit a (230 aa).

5 helical membrane-spanning segments follow: residues 17–37 (LPIT…FIMA), 78–98 (IFPF…IGVI), 107–127 (DLSV…WFGI), 165–187 (LFGN…GFLV), and 198–218 (EAII…AGGI).

Belongs to the ATPase A chain family. As to quaternary structure, F-type ATPases have 2 components, CF(1) - the catalytic core - and CF(0) - the membrane proton channel. CF(1) has five subunits: alpha(3), beta(3), gamma(1), delta(1), epsilon(1). CF(0) has three main subunits: a(1), b(2) and c(9-12). The alpha and beta chains form an alternating ring which encloses part of the gamma chain. CF(1) is attached to CF(0) by a central stalk formed by the gamma and epsilon chains, while a peripheral stalk is formed by the delta and b chains.

The protein resides in the cell inner membrane. Functionally, key component of the proton channel; it plays a direct role in the translocation of protons across the membrane. This chain is ATP synthase subunit a, found in Legionella pneumophila (strain Paris).